The sequence spans 640 residues: Chaperone protein HtpG (640 aa).

Residues 1 to 352 (MTEQTATQNY…SADLPLNVSR (352 aa)) are a; substrate-binding. Residues 353 to 571 (ELLQESRDVK…DGELSPQLIR (219 aa)) form a b region. A c region spans residues 572–640 (MLKQAGQAVP…VKRINSLLLK (69 aa)).

This sequence belongs to the heat shock protein 90 family. As to quaternary structure, homodimer.

The protein localises to the cytoplasm. Molecular chaperone. Has ATPase activity. The polypeptide is Chaperone protein HtpG (Acinetobacter baylyi (strain ATCC 33305 / BD413 / ADP1)).